We begin with the raw amino-acid sequence, 426 residues long: Adenylosuccinate synthetase (426 aa).

GTP is bound by residues 12–18 (GDEGKGK) and 40–42 (GHT). Aspartate 13 (proton acceptor) is an active-site residue. 2 residues coordinate Mg(2+): aspartate 13 and glycine 40. IMP-binding positions include 13–16 (DEGK), 38–41 (NAGH), threonine 128, arginine 142, glutamine 223, threonine 238, and arginine 302. Histidine 41 functions as the Proton donor in the catalytic mechanism. Position 298–304 (298–304 (TTTGRAR)) interacts with substrate. Residues arginine 304, 330-332 (KLD), and 412-414 (SVG) each bind GTP.

Belongs to the adenylosuccinate synthetase family. Homodimer. It depends on Mg(2+) as a cofactor.

It localises to the cytoplasm. It catalyses the reaction IMP + L-aspartate + GTP = N(6)-(1,2-dicarboxyethyl)-AMP + GDP + phosphate + 2 H(+). Its pathway is purine metabolism; AMP biosynthesis via de novo pathway; AMP from IMP: step 1/2. Its function is as follows. Plays an important role in the de novo pathway of purine nucleotide biosynthesis. Catalyzes the first committed step in the biosynthesis of AMP from IMP. The chain is Adenylosuccinate synthetase from Thermoanaerobacter pseudethanolicus (strain ATCC 33223 / 39E) (Clostridium thermohydrosulfuricum).